A 287-amino-acid chain; its full sequence is Protein UL24 homolog (287 aa).

Disordered stretches follow at residues 1–33 (MARRRKEVQRGESRSHRSRTRSKTAHHRKFSRR) and 254–287 (RVGKESATKPASYSTSTEESKNLSEPCFDPDSNL). Residues 16–33 (HRSRTRSKTAHHRKFSRR) are compositionally biased toward basic residues.

It belongs to the herpesviridae UL24 family.

It is found in the virion. Its subcellular location is the host cytoplasm. It localises to the host nucleus. The protein resides in the host nucleolus. The protein localises to the host Golgi apparatus. Its function is as follows. May participate in nuclear egress of viral particles. Plays a role in the dispersal of several host nucleolar proteins including NCL/nucleolin and NPM1. Since deletion of host NCL/nucleolin negatively impact on nuclear egress, UL24 supposedly acts on this process through its effect on host nucleoli. The protein is Protein UL24 homolog of Infectious laryngotracheitis virus (strain Thorne V882) (ILTV).